The primary structure comprises 335 residues: Eukaryotic translation initiation factor 3 subunit I (335 aa).

WD repeat units follow at residues 8 to 47 (GHER…RLGT), 50 to 91 (GHQG…KTWD), 145 to 184 (CAES…LLFN), 189 to 228 (EPDL…VMKT), and 286 to 325 (GHFG…FDFT).

The protein belongs to the eIF-3 subunit I family. As to quaternary structure, component of the eukaryotic translation initiation factor 3 (eIF-3) complex.

It localises to the cytoplasm. Component of the eukaryotic translation initiation factor 3 (eIF-3) complex, which is involved in protein synthesis of a specialized repertoire of mRNAs and, together with other initiation factors, stimulates binding of mRNA and methionyl-tRNAi to the 40S ribosome. The eIF-3 complex specifically targets and initiates translation of a subset of mRNAs involved in cell proliferation. The sequence is that of Eukaryotic translation initiation factor 3 subunit I (tif34) from Sclerotinia sclerotiorum (strain ATCC 18683 / 1980 / Ss-1) (White mold).